The chain runs to 243 residues: Small ribosomal subunit protein eS4 (243 aa).

Residues I43 to N105 enclose the S4 RNA-binding domain.

Belongs to the eukaryotic ribosomal protein eS4 family.

The sequence is that of Small ribosomal subunit protein eS4 (rps4e) from Pyrococcus horikoshii (strain ATCC 700860 / DSM 12428 / JCM 9974 / NBRC 100139 / OT-3).